Reading from the N-terminus, the 695-residue chain is Elongation factor G (695 aa).

Positions Glu-8–Thr-282 constitute a tr-type G domain. GTP is bound by residues Ala-17 to Thr-24, Asp-81 to His-85, and Asn-135 to Asp-138.

The protein belongs to the TRAFAC class translation factor GTPase superfamily. Classic translation factor GTPase family. EF-G/EF-2 subfamily.

Its subcellular location is the cytoplasm. Functionally, catalyzes the GTP-dependent ribosomal translocation step during translation elongation. During this step, the ribosome changes from the pre-translocational (PRE) to the post-translocational (POST) state as the newly formed A-site-bound peptidyl-tRNA and P-site-bound deacylated tRNA move to the P and E sites, respectively. Catalyzes the coordinated movement of the two tRNA molecules, the mRNA and conformational changes in the ribosome. This Listeria welshimeri serovar 6b (strain ATCC 35897 / DSM 20650 / CCUG 15529 / CIP 8149 / NCTC 11857 / SLCC 5334 / V8) protein is Elongation factor G.